The chain runs to 292 residues: Protease HtpX (292 aa).

The next 2 helical transmembrane spans lie at 5–25 and 34–54; these read VVLF…VMSV and SGLL…SLLL. Zn(2+) is bound at residue His140. Glu141 is a catalytic residue. Position 144 (His144) interacts with Zn(2+). 2 helical membrane-spanning segments follow: residues 155-175 and 193-213; these read LLQG…GGII and IIVF…AMWF. Residue Glu218 participates in Zn(2+) binding.

It belongs to the peptidase M48B family. Zn(2+) serves as cofactor.

The protein resides in the cell inner membrane. This Xanthomonas campestris pv. campestris (strain B100) protein is Protease HtpX.